The chain runs to 247 residues: RNA-free ribonuclease P (247 aa).

It belongs to the HARP family.

It carries out the reaction Endonucleolytic cleavage of RNA, removing 5'-extranucleotides from tRNA precursor.. Its function is as follows. RNA-free RNase P that catalyzes the removal of the 5'-leader sequence from pre-tRNA to produce the mature 5'-terminus. The chain is RNA-free ribonuclease P from Methanosarcina mazei (strain ATCC BAA-159 / DSM 3647 / Goe1 / Go1 / JCM 11833 / OCM 88) (Methanosarcina frisia).